Consider the following 60-residue polypeptide: Cytotoxin 10 (60 aa).

4 disulfides stabilise this stretch: Cys-3–Cys-21, Cys-14–Cys-38, Cys-42–Cys-53, and Cys-54–Cys-59.

Belongs to the three-finger toxin family. Short-chain subfamily. Type IA cytotoxin sub-subfamily. Monomer in solution; Homodimer and oligomer in the presence of negatively charged lipids forming a pore with a size ranging between 20 and 30 Angstroms. In terms of tissue distribution, expressed by the venom gland.

It localises to the secreted. It is found in the target cell membrane. Shows cytolytic activity on many different cells by forming pore in lipid membranes. In vivo, increases heart rate or kills the animal by cardiac arrest. In addition, it binds to heparin with high affinity, interacts with Kv channel-interacting protein 1 (KCNIP1) in a calcium-independent manner, and binds to integrin alpha-V/beta-3 (ITGAV/ITGB3) with moderate affinity. Has hemolytic activity towards human erythrocytes (EC(50)=0.162 uM) and cytolytic activity towards various cell lines. In Naja naja (Indian cobra), this protein is Cytotoxin 10.